The primary structure comprises 485 residues: Lysine--tRNA ligase (485 aa).

Residues glutamate 391 and glutamate 398 each contribute to the Mg(2+) site.

It belongs to the class-II aminoacyl-tRNA synthetase family. As to quaternary structure, homodimer. The cofactor is Mg(2+).

The protein resides in the cytoplasm. It carries out the reaction tRNA(Lys) + L-lysine + ATP = L-lysyl-tRNA(Lys) + AMP + diphosphate. This Blochmanniella floridana protein is Lysine--tRNA ligase.